Consider the following 162-residue polypeptide: Protein NrdI (162 aa).

It belongs to the NrdI family.

In terms of biological role, probably involved in ribonucleotide reductase function. The polypeptide is Protein NrdI (Streptococcus pyogenes serotype M1).